The chain runs to 304 residues: E3 ubiquitin-protein ligase RNF115 (304 aa).

Residue Ala2 is modified to N-acetylalanine. The disordered stretch occupies residues 95–138 (PLDQDNRANERGHQTHTDFWGARPPRLPLGRRYRSRGSSRPDRS). Positions 98–110 (QDNRANERGHQTH) are enriched in basic and acidic residues. Phosphoserine; by PKB/AKT1 occurs at positions 132 and 133. Residues 228–269 (CPVCKEDYTVEEEVRQLPCNHFFHSSCIVPWLELHDTCPVCR) form an RING-type zinc finger. The tract at residues 272–304 (LNGEDSTRQSQSTEASASNRFSNDSQLHDRWTF) is disordered. The span at 279–296 (RQSQSTEASASNRFSNDS) shows a compositional bias: polar residues.

Interacts with RAB7A. Interacts with EGFR and FLT3. Interacts with BST2. Interacts with STX17. Interacts with YWHAE. Post-translationally, phosphorylated by AKT1, allowing association with the 14-3-3 chaperones that facilitates associating with TLRs. RING-type zinc finger-dependent and E2-dependent autoubiquitination. In terms of processing, deubiquitinated by USP9X; antogonizing its autoubiquitination and subsequent proteasomal degradation. As to expression, expressed at extremely low levels in normal breast, prostate, lung, colon. Higher levels of expression are detected in heart, skeletal muscle, testis as well as in breast and prostate cancer cells.

Its subcellular location is the cytoplasm. The protein localises to the nucleus. It localises to the endoplasmic reticulum. The protein resides in the golgi apparatus. The enzyme catalyses S-ubiquitinyl-[E2 ubiquitin-conjugating enzyme]-L-cysteine + [acceptor protein]-L-lysine = [E2 ubiquitin-conjugating enzyme]-L-cysteine + N(6)-ubiquitinyl-[acceptor protein]-L-lysine.. Its pathway is protein modification; protein ubiquitination. In terms of biological role, E3 ubiquitin-protein ligase that catalyzes the 'Lys-48'- and/or 'Lys-63'-linked polyubiquitination of various substrates and thereby plays a role in a number of signaling pathways including autophagy, innate immunity, cell proliferation and cell death. Plays a role in the endosomal trafficking and degradation of membrane receptors including EGFR, FLT3, MET and CXCR4 through their polyubiquitination. Participates together with BST2 in antiviral immunity by facilitating the internalization of HIV-1 virions into intracellular vesicles leading to their lysosomal degradation. Also possesses an antiviral activity independently of BST2 by promoting retroviral GAG proteins ubiquitination, redistribution to endo-lysosomal compartments and, ultimately, lysosomal degradation. Catalyzes distinct types of ubiquitination on MAVS and STING1 at different phases of viral infection to promote innate antiviral response. Mediates the 'Lys-48'-linked ubiquitination of MAVS leading to its proteasomal degradation and ubiquitinates STING1 via 'Lys-63'-linked polyubiquitination, critical for its oligomerization and the subsequent recruitment of TBK1. Plays a positive role in the autophagosome-lysosome fusion by interacting with STX17 and enhancing its stability without affecting 'Lys-48'- or 'Lys-63'-linked polyubiquitination levels, which in turn promotes autophagosome maturation. Negatively regulates TLR-induced expression of proinflammatory cytokines by catalyzing 'Lys-11'-linked ubiquitination of RAB1A and RAB13 to inhibit post-ER trafficking of TLRs to the Golgi by RAB1A and subsequently from the Golgi apparatus to the cell surface by RAB13. The polypeptide is E3 ubiquitin-protein ligase RNF115 (Homo sapiens (Human)).